The following is a 267-amino-acid chain: Kafirin PSK8 (267 aa).

A signal peptide spans 1 to 19 (TKIFALLALHALLVSGTTA).

Belongs to the zein family.

In terms of biological role, major seed storage prolamin. The chain is Kafirin PSK8 from Sorghum bicolor (Sorghum).